A 707-amino-acid chain; its full sequence is Prolyl endopeptidase-like (707 aa).

Catalysis depends on charge relay system residues S538, D624, and H670.

This sequence belongs to the peptidase S9A family. Homodimer.

The protein resides in the cytoplasm. The protein localises to the cytosol. Functionally, serine peptidase whose precise substrate specificity remains unclear. Does not cleave peptides after a arginine or lysine residue. Regulates trans-Golgi network morphology and sorting by regulating the membrane binding of the AP-1 complex. May play a role in the regulation of synaptic vesicle exocytosis. The chain is Prolyl endopeptidase-like (prepl) from Xenopus laevis (African clawed frog).